Consider the following 129-residue polypeptide: Glycine cleavage system H protein (129 aa).

Positions 24 to 106 constitute a Lipoyl-binding domain; the sequence is TYTVGITEHA…YVGGWIFKIK (83 aa). Lysine 65 carries the N6-lipoyllysine modification.

The protein belongs to the GcvH family. In terms of assembly, the glycine cleavage system is composed of four proteins: P, T, L and H. (R)-lipoate is required as a cofactor.

In terms of biological role, the glycine cleavage system catalyzes the degradation of glycine. The H protein shuttles the methylamine group of glycine from the P protein to the T protein. The sequence is that of Glycine cleavage system H protein from Salmonella paratyphi B (strain ATCC BAA-1250 / SPB7).